A 335-amino-acid polypeptide reads, in one-letter code: MGPLSAPPCTEHIKWKGLLLTALLLNFWNLPTTAQVMIEAQPPKVSEGKDVLLLVHNLPQNLTGYIWYKGQIRDLYHYITSYVVDGQIIIYGPAYSGRETVYSNASLLIQNVTREDAGSYTLHIIKRGDGTRGVTGYFTFTLYLETPKPSISSSNLNPREAMETVILTCNPETPDASYLWWMNGQSLPMTHRMQLSETNRTLFLFGVTKYTAGPYECEIWNSGSASRSDPVTLNLLHGPDLPRIFPSVTSYYSGENLDLSCFANSNPPAQYSWTINGKFQLSGQKLFIPQITPKHNGLYACSARNSATGEESSTSLTIRVIAPPGLGTFAFNNPT.

Positions 1–34 are cleaved as a signal peptide; that stretch reads MGPLSAPPCTEHIKWKGLLLTALLLNFWNLPTTA. In terms of domain architecture, Ig-like V-type spans 35-144; it reads QVMIEAQPPK…TGYFTFTLYL (110 aa). 3 N-linked (GlcNAc...) asparagine glycosylation sites follow: N61, N104, and N111. Positions 127–129 match the Cell attachment site motif; sequence RGD. 2 consecutive Ig-like C2-type domains span residues 147-234 and 242-317; these read PKPS…VTLN and PRIF…TSLT. Cystine bridges form between C169–C217 and C261–C301.

The protein belongs to the immunoglobulin superfamily. CEA family.

The protein localises to the secreted. This chain is Pregnancy-specific beta-1-glycoprotein 11 (PSG11), found in Homo sapiens (Human).